Consider the following 196-residue polypeptide: dTTP/UTP pyrophosphatase (196 aa).

Catalysis depends on aspartate 72, which acts as the Proton acceptor.

Belongs to the Maf family. YhdE subfamily. The cofactor is a divalent metal cation.

The protein localises to the cytoplasm. It catalyses the reaction dTTP + H2O = dTMP + diphosphate + H(+). The enzyme catalyses UTP + H2O = UMP + diphosphate + H(+). Nucleoside triphosphate pyrophosphatase that hydrolyzes dTTP and UTP. May have a dual role in cell division arrest and in preventing the incorporation of modified nucleotides into cellular nucleic acids. The sequence is that of dTTP/UTP pyrophosphatase from Chlamydia caviae (strain ATCC VR-813 / DSM 19441 / 03DC25 / GPIC) (Chlamydophila caviae).